Consider the following 261-residue polypeptide: DNA repair protein RecO (261 aa).

The protein belongs to the RecO family.

Functionally, involved in DNA repair and RecF pathway recombination. This chain is DNA repair protein RecO, found in Gloeobacter violaceus (strain ATCC 29082 / PCC 7421).